A 267-amino-acid polypeptide reads, in one-letter code: Protein isy-1 (267 aa).

Residues L175–D204 are a coiled coil. The disordered stretch occupies residues Q195 to L221.

It belongs to the ISY1 family. Ubiquitously expressed.

It localises to the nucleus. In terms of biological role, regulates the processing of the mir-60 microRNA (miRNA), which in turn negatively regulates the expression of the transcription factor zip-10. Does not affect the splicing of zip-10. This Caenorhabditis elegans protein is Protein isy-1.